Here is a 187-residue protein sequence, read N- to C-terminus: UPF0398 protein LJ_1195 (187 aa).

This sequence belongs to the UPF0398 family.

This chain is UPF0398 protein LJ_1195, found in Lactobacillus johnsonii (strain CNCM I-12250 / La1 / NCC 533).